We begin with the raw amino-acid sequence, 342 residues long: DNA-directed RNA polymerase subunit alpha (342 aa).

An alpha N-terminal domain (alpha-NTD) region spans residues 1–239 (MTTFLAKNWS…DQLQVFINFQ (239 aa)). The segment at 254–342 (INPVLLKKVY…SLAKKHEDQY (89 aa)) is alpha C-terminal domain (alpha-CTD).

It belongs to the RNA polymerase alpha chain family. In terms of assembly, homodimer. The RNAP catalytic core consists of 2 alpha, 1 beta, 1 beta' and 1 omega subunit. When a sigma factor is associated with the core the holoenzyme is formed, which can initiate transcription.

The catalysed reaction is RNA(n) + a ribonucleoside 5'-triphosphate = RNA(n+1) + diphosphate. DNA-dependent RNA polymerase catalyzes the transcription of DNA into RNA using the four ribonucleoside triphosphates as substrates. The chain is DNA-directed RNA polymerase subunit alpha from Orientia tsutsugamushi (strain Ikeda) (Rickettsia tsutsugamushi).